Reading from the N-terminus, the 476-residue chain is Cysteine--tRNA ligase (476 aa).

A Zn(2+)-binding site is contributed by Cys-36. Positions 38–48 (PTVYDYAHIGN) match the 'HIGH' region motif. Zn(2+) is bound by residues Cys-221, His-246, and Glu-250. Positions 278–282 (KMSKS) match the 'KMSKS' region motif. ATP is bound at residue Lys-281.

Belongs to the class-I aminoacyl-tRNA synthetase family. Monomer. Zn(2+) is required as a cofactor.

The protein localises to the cytoplasm. The catalysed reaction is tRNA(Cys) + L-cysteine + ATP = L-cysteinyl-tRNA(Cys) + AMP + diphosphate. The protein is Cysteine--tRNA ligase of Chlamydia abortus (strain DSM 27085 / S26/3) (Chlamydophila abortus).